Here is a 650-residue protein sequence, read N- to C-terminus: Macrolide export ATP-binding/permease protein MacB (650 aa).

The ABC transporter domain occupies 9–248; that stretch reads IELIDLERVF…RPLGRPPGGA (240 aa). Residue 45-52 coordinates ATP; sequence GQSGSGKS. 4 helical membrane passes run 276-296, 525-545, 580-600, and 615-635; these read ALTL…MAIG, LTLL…IGVM, AVAV…GAAL, and PPIV…YLPA.

This sequence belongs to the ABC transporter superfamily. Macrolide exporter (TC 3.A.1.122) family. Homodimer.

The protein localises to the cell inner membrane. Non-canonical ABC transporter that contains transmembrane domains (TMD), which form a pore in the inner membrane, and an ATP-binding domain (NBD), which is responsible for energy generation. Confers resistance against macrolides. This is Macrolide export ATP-binding/permease protein MacB from Rhodospirillum rubrum (strain ATCC 11170 / ATH 1.1.1 / DSM 467 / LMG 4362 / NCIMB 8255 / S1).